Consider the following 212-residue polypeptide: MTDTEKSFKVVLLGEGCVGKTSIVFRYIDNIFNDKHLMTQHAGFFQKHINIGGKRICLTIWDTAGQERFHALGPIYYRGSQGALVVYDITDNDSFIKAKNWIKELKTMLGNDISLCIIGNKCDLEKTRVIPLADAEAYAKSVGAIHYSTSAKLNKGIEELFLDLTRRMILNSSGVVIHSNTNTTGQTTNRSERIPIVPDSDSGNKQPGCCSN.

GTP is bound by residues Gly-14–Thr-21, Asp-62–Gln-66, and Asn-120–Asp-123. Residues Thr-181–Asn-212 are disordered. Residues Asp-201–Asn-212 show a composition bias toward polar residues. S-geranylgeranyl cysteine attachment occurs at residues Cys-209 and Cys-210.

It belongs to the small GTPase superfamily. Rab family. As to quaternary structure, interacts with LIM domain proteins limF and ChLim.

The protein resides in the cell membrane. Its function is as follows. Involved in the regulation of phagocytosis. The chain is Ras-related protein Rab-21 (rab21) from Dictyostelium discoideum (Social amoeba).